The chain runs to 93 residues: Large ribosomal subunit protein uL23cz/uL23cy (93 aa).

Belongs to the universal ribosomal protein uL23 family. Part of the 50S ribosomal subunit.

It is found in the plastid. The protein localises to the chloroplast. Binds to 23S rRNA. The chain is Large ribosomal subunit protein uL23cz/uL23cy (rpl23-A) from Jasminum nudiflorum (Winter jasmine).